A 593-amino-acid chain; its full sequence is Uncoordinated protein 58 (593 aa).

The next 6 helical transmembrane spans lie at 186-206 (VILVSVLIGYLCLGAWILMLL), 291-311 (TFPTALLYVLTVLTTCGYGEV), 320-340 (VFSVAFALVGIPLMFITAADI), 402-422 (PIGAYVSCICLYCSMGSAMFI), 430-450 (FIHAFHFGFNLIVTVGLGDIV), and 455-475 (IFLSLIVAFVIVGLSVVTMCV).

Belongs to the two pore domain potassium channel (TC 1.A.1.8) family.

It is found in the membrane. Has a role in mobility, possibly in the transport of potassium in muscles. This Caenorhabditis briggsae protein is Uncoordinated protein 58.